Consider the following 2214-residue polypeptide: Genome polyprotein (2214 aa).

Disordered stretches follow at residues 1–21 and 600–619; these read MGAQ…VATG and KPQK…VNSQ. Residue Gly-2 is the site of N-myristoyl glycine; by host attachment. Residues 2-1525 are Cytoplasmic-facing; it reads GAQVSSQKVG…NLNRAMTILQ (1524 aa). Amphipathic alpha-helix regions lie at residues 580–601 and 581–601; these read QGIE…QPKP and GIEE…QPKP. Positions 606-619 are enriched in polar residues; that stretch reads TAQSTPSTSGVNSQ. Active-site for protease 2A activity residues include His-906 and Asp-924. Cys-941 and Cys-943 together coordinate Zn(2+). The For protease 2A activity role is filled by Cys-995. The Zn(2+) site is built by Cys-1001 and His-1003. Positions 1133–1205 are membrane-binding; the sequence is GDSWLKKFTE…HQSCPSQEQQ (73 aa). The tract at residues 1133–1271 is oligomerization; it reads GDSWLKKFTE…SPGTGKSIAT (139 aa). Residues 1154–1158 are RNA-binding; the sequence is SNKIS. One can recognise an SF3 helicase domain in the interval 1237–1393; it reads ENTINNYIQF…SEHSIKGKLN (157 aa). 1261-1268 lines the ATP pocket; it reads GSPGTGKS. The Zn(2+) site is built by Cys-1401, Cys-1404, Cys-1413, and Cys-1418. The C4-type zinc-finger motif lies at 1401-1418; sequence CKDCPQPANFKKCCPLVC. Positions 1445–1452 are RNA-binding; the sequence is ERNRRANI. Residues 1456-1461 form an oligomerization region; it reads MEALFQ. Residues 1526-1541 lie within the membrane without spanning it; it reads AVTTFAAVAAVVYVMY. Residues 1542–2214 lie on the Cytoplasmic side of the membrane; that stretch reads KLFAGHQGAY…TLYRRWLDSF (673 aa). An O-(5'-phospho-RNA)-tyrosine modification is found at Tyr-1551. The region spanning 1571–1749 is the Peptidase C3 domain; the sequence is GPGFDYAVAM…FAAALKRSYF (179 aa). Catalysis depends on for protease 3C activity residues His-1610, Glu-1641, and Cys-1717. A RdRp catalytic domain is found at 1980 to 2095; sequence EKLFAFDYTG…SYPHEVDASL (116 aa). Positions 1986 and 2081 each coordinate Mg(2+).

The protein belongs to the picornaviruses polyprotein family. In terms of assembly, interacts with capsid protein VP1 and capsid protein VP3 to form heterotrimeric protomers. Interacts with capsid protein VP0, and capsid protein VP3 to form heterotrimeric protomers. Five protomers subsequently associate to form pentamers which serve as building blocks for the capsid. Interacts with capsid protein VP2, capsid protein VP3 and capsid protein VP4 following cleavage of capsid protein VP0. As to quaternary structure, interacts with capsid protein VP1 and capsid protein VP3 in the mature capsid. In terms of assembly, interacts with capsid protein VP0 and capsid protein VP1 to form heterotrimeric protomers. Five protomers subsequently associate to form pentamers which serve as building blocks for the capsid. Interacts with capsid protein VP4 in the mature capsid. Interacts with protein 2C; this interaction may be important for virion morphogenesis. Interacts with capsid protein VP1 and capsid protein VP3. As to quaternary structure, homodimer. In terms of assembly, homohexamer; forms a hexameric ring structure with 6-fold symmetry characteristic of AAA+ ATPases. Interacts (via N-terminus) with host RTN3 (via reticulon domain); this interaction is important for viral replication. Interacts with capsid protein VP3; this interaction may be important for virion morphogenesis. Interacts with protein 3CD. As to quaternary structure, homodimer. Interacts with host GBF1. Interacts (via GOLD domain) with host ACBD3 (via GOLD domain); this interaction allows the formation of a viral protein 3A/ACBD3 heterotetramer with a 2:2 stoichiometry, which will stimulate the recruitment of host PI4KB in order to synthesize PI4P at the viral RNA replication sites. In terms of assembly, interacts with RNA-directed RNA polymerase. Interacts with protein 3AB and with RNA-directed RNA polymerase. As to quaternary structure, interacts with Viral protein genome-linked and with protein 3CD. The cofactor is Mg(2+). Post-translationally, specific enzymatic cleavages in vivo by the viral proteases yield processing intermediates and the mature proteins. In terms of processing, myristoylation is required for the formation of pentamers during virus assembly. Further assembly of 12 pentamers and a molecule of genomic RNA generates the provirion. During virion maturation, immature virions are rendered infectious following cleavage of VP0 into VP4 and VP2. This maturation seems to be an autocatalytic event triggered by the presence of RNA in the capsid and it is followed by a conformational change infectious virion. Post-translationally, myristoylation is required during RNA encapsidation and formation of the mature virus particle. In terms of processing, VPg is uridylylated by the polymerase into VPg-pUpU. This acts as a nucleotide-peptide primer for the genomic RNA replication.

Its subcellular location is the virion. It localises to the host cytoplasm. The protein resides in the host cytoplasmic vesicle membrane. The protein localises to the host nucleus. The catalysed reaction is a ribonucleoside 5'-triphosphate + H2O = a ribonucleoside 5'-diphosphate + phosphate + H(+). It catalyses the reaction Selective cleavage of Tyr-|-Gly bond in the picornavirus polyprotein.. It carries out the reaction RNA(n) + a ribonucleoside 5'-triphosphate = RNA(n+1) + diphosphate. The enzyme catalyses Selective cleavage of Gln-|-Gly bond in the poliovirus polyprotein. In other picornavirus reactions Glu may be substituted for Gln, and Ser or Thr for Gly.. Its activity is regulated as follows. Replication or transcription is subject to high level of random mutations by the nucleotide analog ribavirin. Functionally, forms an icosahedral capsid of pseudo T=3 symmetry with capsid proteins VP2 and VP3. The capsid is 300 Angstroms in diameter, composed of 60 copies of each capsid protein and enclosing the viral positive strand RNA genome. Capsid protein VP1 mainly forms the vertices of the capsid. Capsid protein VP1 interacts with host cell receptor to provide virion attachment to target host cells. This attachment induces virion internalization. Tyrosine kinases are probably involved in the entry process. After binding to its receptor, the capsid undergoes conformational changes. Capsid protein VP1 N-terminus (that contains an amphipathic alpha-helix) and capsid protein VP4 are externalized. Together, they shape a pore in the host membrane through which viral genome is translocated to host cell cytoplasm. Forms an icosahedral capsid of pseudo T=3 symmetry with capsid proteins VP2 and VP3. The capsid is 300 Angstroms in diameter, composed of 60 copies of each capsid protein and enclosing the viral positive strand RNA genome. Its function is as follows. Lies on the inner surface of the capsid shell. After binding to the host receptor, the capsid undergoes conformational changes. Capsid protein VP4 is released, Capsid protein VP1 N-terminus is externalized, and together, they shape a pore in the host membrane through which the viral genome is translocated into the host cell cytoplasm. In terms of biological role, component of immature procapsids, which is cleaved into capsid proteins VP4 and VP2 after maturation. Allows the capsid to remain inactive before the maturation step. Functionally, cysteine protease that cleaves viral polyprotein and specific host proteins. It is responsible for the autocatalytic cleavage between the P1 and P2 regions, which is the first cleavage occurring in the polyprotein. Also cleaves the host translation initiation factor EIF4G1, in order to shut down the capped cellular mRNA translation. Inhibits the host nucleus-cytoplasm protein and RNA trafficking by cleaving host members of the nuclear pores. Counteracts stress granule formation probably by antagonizing its assembly or promoting its dissassembly. Cleaves and inhibits host IFIH1/MDA5, thereby inhibiting the type-I IFN production and the establishment of the antiviral state. Cleaves and inhibits host MAVS, thereby inhibiting the type-I IFN production and the establishment of the antiviral state. Plays an essential role in the virus replication cycle by acting as a viroporin. Creates a pore in the host endoplasmic reticulum and as a consequence releases Ca2+ in the cytoplasm of infected cell. In turn, high levels of cytoplasmic calcium may trigger membrane trafficking and transport of viral ER-associated proteins to viroplasms, sites of viral genome replication. Its function is as follows. Induces and associates with structural rearrangements of intracellular membranes. Displays RNA-binding, nucleotide binding and NTPase activities. May play a role in virion morphogenesis and viral RNA encapsidation by interacting with the capsid protein VP3. In terms of biological role, localizes the viral replication complex to the surface of membranous vesicles. Together with protein 3CD binds the Cis-Active RNA Element (CRE) which is involved in RNA synthesis initiation. Acts as a cofactor to stimulate the activity of 3D polymerase, maybe through a nucleid acid chaperone activity. Functionally, localizes the viral replication complex to the surface of membranous vesicles. It inhibits host cell endoplasmic reticulum-to-Golgi apparatus transport and causes the disassembly of the Golgi complex, possibly through GBF1 interaction. This would result in depletion of MHC, trail receptors and IFN receptors at the host cell surface. Plays an essential role in viral RNA replication by recruiting ACBD3 and PI4KB at the viral replication sites, thereby allowing the formation of the rearranged membranous structures where viral replication takes place. Acts as a primer for viral RNA replication and remains covalently bound to viral genomic RNA. VPg is uridylylated prior to priming replication into VPg-pUpU. The oriI viral genomic sequence may act as a template for this. The VPg-pUpU is then used as primer on the genomic RNA poly(A) by the RNA-dependent RNA polymerase to replicate the viral genome. During genome replication, the VPg-RNA linkage is removed by the host TDP2, thereby accelerating replication. During the late stage of the replication cycle, host TDP2 is excluded from sites of viral RNA synthesis and encapsidation, allowing for the generation of progeny virions. Its function is as follows. Involved in the viral replication complex and viral polypeptide maturation. It exhibits protease activity with a specificity and catalytic efficiency that is different from protease 3C. Protein 3CD lacks polymerase activity. Protein 3CD binds to the 5'UTR of the viral genome. In terms of biological role, replicates the viral genomic RNA on the surface of intracellular membranes. May form linear arrays of subunits that propagate along a strong head-to-tail interaction called interface-I. Covalently attaches UMP to a tyrosine of VPg, which is used to prime RNA synthesis. The positive stranded RNA genome is first replicated at virus induced membranous vesicles, creating a dsRNA genomic replication form. This dsRNA is then used as template to synthesize positive stranded RNA genomes. ss(+)RNA genomes are either translated, replicated or encapsidated. Functionally, major viral protease that mediates proteolytic processing of the polyprotein. Cleaves host EIF5B, contributing to host translation shutoff. Also cleaves host PABPC1, contributing to host translation shutoff. Cleaves host NLRP1, triggers host N-glycine-mediated degradation of the autoinhibitory NLRP1 N-terminal fragment. This chain is Genome polyprotein, found in Coxsackievirus A24 (strain EH24/70).